The primary structure comprises 644 residues: Arginine--tRNA ligase (644 aa).

Positions 129–139 (ANPIHPLHLGH) match the 'HIGH' region motif.

The protein belongs to the class-I aminoacyl-tRNA synthetase family.

It localises to the cytoplasm. It carries out the reaction tRNA(Arg) + L-arginine + ATP = L-arginyl-tRNA(Arg) + AMP + diphosphate. The polypeptide is Arginine--tRNA ligase (argS) (Aeropyrum pernix (strain ATCC 700893 / DSM 11879 / JCM 9820 / NBRC 100138 / K1)).